A 472-amino-acid chain; its full sequence is MDSIQQDRLSSLPDILLIMIISFLPLKECVRTSVLSKRWRYLCLETTNLSFKESDYVNPDITDAEYSRIVAYRSFFCSVDKWVSITQHQVVESFEICFSHLVGFEDKIDALIEYAVSTRVKNLVVDLSNPSWRSNGDISYRHFMYTLPKSVYSLTTLESLKIYGCKFDPSKFVNPVLLRSLSIGWVRLENLHSLLSKSPSLQSLSIKNCWGVDITSMAGQFRELVIEHSDFSYMQCAFELPRIHSFKYSGELFEFYFDVVNVIIPNVYLDFGEERVYDLQSQSSRISGEVISRIINDLRAAETLTVCPYILQVIPECEKPSDLLQPMETRHLVLRTKMHTKEFNGIILLLNNCPNLETLGFDILTPCPFSATSSDEGIDPKTYWMQKRTCKSLRKTLKVVVIRNFCGSSNELNVLRYLIRSASGAGDALERVELYVPNGMEESQAMVVFAKAEMLQRTSKHVQVLCAQLLKK.

The F-box domain maps to 6 to 54 (QDRLSSLPDILLIMIISFLPLKECVRTSVLSKRWRYLCLETTNLSFKES). 6 LRR repeats span residues 58–87 (NPDI…SITQ), 135–164 (NGDI…KIYG), 183–208 (IGWV…SIKN), 225–250 (VIEH…KYSG), 283–308 (SSRI…TVCP), and 338–363 (MHTK…GFDI).

The polypeptide is Putative F-box/LRR-repeat protein At5g54820 (Arabidopsis thaliana (Mouse-ear cress)).